Consider the following 434-residue polypeptide: Lipoyl synthase, mitochondrial (434 aa).

The N-terminal 31 residues, 1-31 (MAASARGLRTLQSAHSSTTVPRLQLAVSRCY), are a transit peptide targeting the mitochondrion. Residues 34 to 54 (TTSPDPPITNSSNSSNSTPTP) are compositionally biased toward low complexity. The disordered stretch occupies residues 34-55 (TTSPDPPITNSSNSSNSTPTPK). The [4Fe-4S] cluster site is built by C144, C149, C155, C175, C179, C182, and S390. In terms of domain architecture, Radical SAM core spans 158 to 379 (GSSKSAATAT…KERALEMGFL (222 aa)).

Belongs to the radical SAM superfamily. Lipoyl synthase family. [4Fe-4S] cluster serves as cofactor.

The protein resides in the mitochondrion. It catalyses the reaction [[Fe-S] cluster scaffold protein carrying a second [4Fe-4S](2+) cluster] + N(6)-octanoyl-L-lysyl-[protein] + 2 oxidized [2Fe-2S]-[ferredoxin] + 2 S-adenosyl-L-methionine + 4 H(+) = [[Fe-S] cluster scaffold protein] + N(6)-[(R)-dihydrolipoyl]-L-lysyl-[protein] + 4 Fe(3+) + 2 hydrogen sulfide + 2 5'-deoxyadenosine + 2 L-methionine + 2 reduced [2Fe-2S]-[ferredoxin]. It functions in the pathway protein modification; protein lipoylation via endogenous pathway; protein N(6)-(lipoyl)lysine from octanoyl-[acyl-carrier-protein]: step 2/2. In terms of biological role, catalyzes the radical-mediated insertion of two sulfur atoms into the C-6 and C-8 positions of the octanoyl moiety bound to the lipoyl domains of lipoate-dependent enzymes, thereby converting the octanoylated domains into lipoylated derivatives. The chain is Lipoyl synthase, mitochondrial from Paracoccidioides brasiliensis (strain Pb03).